The sequence spans 308 residues: 4-hydroxyproline 2-epimerase (308 aa).

Cysteine 88 (proton acceptor) is an active-site residue. Residues 89-90 (GH), histidine 208, and aspartate 232 contribute to the substrate site. Cysteine 236 functions as the Proton donor in the catalytic mechanism. 237-238 (GT) contacts substrate.

The protein belongs to the proline racemase family.

It catalyses the reaction trans-4-hydroxy-L-proline = cis-4-hydroxy-D-proline. Its function is as follows. Catalyzes the epimerization of trans-4-hydroxy-L-proline (t4LHyp) to cis-4-hydroxy-D-proline (c4DHyp). Is likely involved in a degradation pathway that converts t4LHyp to alpha-ketoglutarate. Can also catalyze the epimerization of trans-3-hydroxy-L-proline (t3LHyp) to cis-3-hydroxy-D-proline (c3DHyp), albeit with 19-fold lower efficiency. Displays no proline racemase activity. This Chromobacterium violaceum (strain ATCC 12472 / DSM 30191 / JCM 1249 / CCUG 213 / NBRC 12614 / NCIMB 9131 / NCTC 9757 / MK) protein is 4-hydroxyproline 2-epimerase.